We begin with the raw amino-acid sequence, 299 residues long: Ribosomal RNA small subunit methyltransferase H (299 aa).

Residues 32-34, D52, F79, D100, and Q107 contribute to the S-adenosyl-L-methionine site; that span reads AGH.

Belongs to the methyltransferase superfamily. RsmH family.

It localises to the cytoplasm. The catalysed reaction is cytidine(1402) in 16S rRNA + S-adenosyl-L-methionine = N(4)-methylcytidine(1402) in 16S rRNA + S-adenosyl-L-homocysteine + H(+). Its function is as follows. Specifically methylates the N4 position of cytidine in position 1402 (C1402) of 16S rRNA. The chain is Ribosomal RNA small subunit methyltransferase H from Mycoplasmopsis pulmonis (strain UAB CTIP) (Mycoplasma pulmonis).